The primary structure comprises 224 residues: Germin-like protein 8-10 (224 aa).

The first 22 residues, 1 to 22, serve as a signal peptide directing secretion; that stretch reads MASPSICLLAALLALVSWQAIA. Cysteines 32 and 47 form a disulfide. Positions 62-212 constitute a Cupin type-1 domain; the sequence is AMLDTPRKTN…AFQVEKGTID (151 aa). Asparagine 76 carries an N-linked (GlcNAc...) asparagine glycan. Positions 109, 111, and 116 each coordinate Mn(2+). An N-linked (GlcNAc...) asparagine glycan is attached at asparagine 135. Histidine 157 is a binding site for Mn(2+).

This sequence belongs to the germin family. As to quaternary structure, oligomer (believed to be a pentamer but probably hexamer).

The protein localises to the secreted. It localises to the extracellular space. The protein resides in the apoplast. Functionally, plays a role in broad-spectrum disease resistance. Probably has no oxalate oxidase activity even if the active site is conserved. This is Germin-like protein 8-10 (GLP2) from Oryza sativa subsp. japonica (Rice).